The primary structure comprises 55 residues: Accessory gland-specific peptide 70A (55 aa).

The signal sequence occupies residues 1–19 (MKTLSVFLVLVCLLGLVQS). A hydroxyproline mark is found at proline 28, proline 32, proline 34, and proline 38. The cysteines at positions 43 and 55 are disulfide-linked.

In terms of tissue distribution, main cells of the accessory glands of males (paragonial gland).

It is found in the secreted. Its function is as follows. Represses female sexual receptivity and stimulates oviposition. This Drosophila sechellia (Fruit fly) protein is Accessory gland-specific peptide 70A (Acp70A).